Here is a 215-residue protein sequence, read N- to C-terminus: Probable transaldolase (215 aa).

K83 acts as the Schiff-base intermediate with substrate in catalysis.

This sequence belongs to the transaldolase family. Type 3B subfamily.

The protein resides in the cytoplasm. The enzyme catalyses D-sedoheptulose 7-phosphate + D-glyceraldehyde 3-phosphate = D-erythrose 4-phosphate + beta-D-fructose 6-phosphate. It participates in carbohydrate degradation; pentose phosphate pathway; D-glyceraldehyde 3-phosphate and beta-D-fructose 6-phosphate from D-ribose 5-phosphate and D-xylulose 5-phosphate (non-oxidative stage): step 2/3. Functionally, transaldolase is important for the balance of metabolites in the pentose-phosphate pathway. The polypeptide is Probable transaldolase (Streptococcus agalactiae serotype III (strain NEM316)).